We begin with the raw amino-acid sequence, 96 residues long: Small ribosomal subunit protein bS6 (96 aa).

It belongs to the bacterial ribosomal protein bS6 family.

Its function is as follows. Binds together with bS18 to 16S ribosomal RNA. The chain is Small ribosomal subunit protein bS6 from Thermobifida fusca (strain YX).